Here is a 460-residue protein sequence, read N- to C-terminus: Anthocyanidin 3-O-glucoside 5-O-glucosyltransferase 1 (460 aa).

A signal peptide spans 1-22 (MVRRRVLLATFPAQGHINPALQ). H16 serves as the catalytic Proton acceptor. H16 lines the an anthocyanidin pocket. Residues Q338, H353, W356, N357, S358, E361, D377, and Q378 each contribute to the UDP-alpha-D-glucose site.

The protein belongs to the UDP-glycosyltransferase family.

It catalyses the reaction an anthocyanidin 3-O-beta-D-glucoside + UDP-alpha-D-glucose = an anthocyanidin 3,5-di-O-beta-D-glucoside + UDP + 2 H(+). Its pathway is pigment biosynthesis; anthocyanin biosynthesis. Functionally, catalyzes the glucosylation at the O-5 position of anthocyanidin 3-glucosides to form anthocyanidin 3,5-di-O-glucosides using UDP-glucose as sugar donor. Anthocyanidin 3,5-di-O-glucosides are molecules that are responsible for pigmentation. Also acts on anthocyanidin 3-O-(6-O-malonylglucoside). Much less active with hydroxycinnamoylglucose derivatives. No activity in the absence of the 3-O-glucoside group. The polypeptide is Anthocyanidin 3-O-glucoside 5-O-glucosyltransferase 1 (PF3R4) (Perilla frutescens (Beefsteak mint)).